The following is a 332-amino-acid chain: Endo-1,4-beta-xylanase B (332 aa).

A GH10 domain is found at 2 to 331 (STEIPSLSAS…KDSFWRIIGQ (330 aa)). Catalysis depends on Glu-134, which acts as the Proton donor. Residue Glu-241 is the Nucleophile of the active site.

Belongs to the glycosyl hydrolase 10 (cellulase F) family. Cytoplasmic xylanase subfamily.

It localises to the cytoplasm. It carries out the reaction Endohydrolysis of (1-&gt;4)-beta-D-xylosidic linkages in xylans.. It participates in glycan degradation; xylan degradation. Completely inhibited by Ag(2+), Cu(2+), Hg(2+), Mn(2+), Pb(2+) and Sn(2+). Strongly inhibited by Fe(2+) and Zn(2+). Co(2+) and Ni(2+) cause little inhibition while Ca(2+) and Mg(2+) do not affect enzyme activity, and Ba(2+) produces a small stimulating effect. Irreversibly inactivated by SDS in vitro. Functionally, plays a role in plant xylan biodegradation, probably via the hydrolysis of short xylooligosaccharides resulting from extracellular xylan hydrolysis, once they have been transported inside cells. Shows similar activity on xylans of different rate of arabinose or methylglucuronic substitution. Also displays high activity on aryl-xylosides. Is active on xylotetraose and xylotriose, but does not hydrolyze xylobiose, indicating that XynB is a xylanase and not a beta-xylosidase. The sequence is that of Endo-1,4-beta-xylanase B (xynB) from Paenibacillus barcinonensis.